We begin with the raw amino-acid sequence, 644 residues long: Exoribonuclease 2 (644 aa).

The RNB domain maps to 189–516 (REDLTSLDFV…NHRLLKAVIK (328 aa)). The 83-residue stretch at 561–643 (GTRFAAEIVD…ETRSIIARPV (83 aa)) folds into the S1 motif domain.

The protein belongs to the RNR ribonuclease family. RNase II subfamily.

It localises to the cytoplasm. The enzyme catalyses Exonucleolytic cleavage in the 3'- to 5'-direction to yield nucleoside 5'-phosphates.. In terms of biological role, involved in mRNA degradation. Hydrolyzes single-stranded polyribonucleotides processively in the 3' to 5' direction. The protein is Exoribonuclease 2 of Shigella flexneri serotype 5b (strain 8401).